Reading from the N-terminus, the 432-residue chain is Glutamyl-tRNA reductase (432 aa).

Substrate-binding positions include 49 to 52, serine 109, 114 to 116, and glutamine 120; these read TCNR and EGQ. Cysteine 50 serves as the catalytic Nucleophile. Residue 189–194 coordinates NADP(+); the sequence is GAGKMS.

This sequence belongs to the glutamyl-tRNA reductase family. As to quaternary structure, homodimer.

It is found in the plastid. The protein localises to the cyanelle. The catalysed reaction is (S)-4-amino-5-oxopentanoate + tRNA(Glu) + NADP(+) = L-glutamyl-tRNA(Glu) + NADPH + H(+). It participates in porphyrin-containing compound metabolism; protoporphyrin-IX biosynthesis; 5-aminolevulinate from L-glutamyl-tRNA(Glu): step 1/2. The protein operates within porphyrin-containing compound metabolism; chlorophyll biosynthesis. In terms of biological role, catalyzes the NADPH-dependent reduction of glutamyl-tRNA(Glu) to glutamate 1-semialdehyde (GSA). The chain is Glutamyl-tRNA reductase from Cyanophora paradoxa.